An 873-amino-acid polypeptide reads, in one-letter code: Alanine--tRNA ligase (873 aa).

4 residues coordinate Zn(2+): histidine 562, histidine 566, cysteine 664, and histidine 668.

It belongs to the class-II aminoacyl-tRNA synthetase family. It depends on Zn(2+) as a cofactor.

It localises to the cytoplasm. The catalysed reaction is tRNA(Ala) + L-alanine + ATP = L-alanyl-tRNA(Ala) + AMP + diphosphate. In terms of biological role, catalyzes the attachment of alanine to tRNA(Ala) in a two-step reaction: alanine is first activated by ATP to form Ala-AMP and then transferred to the acceptor end of tRNA(Ala). Also edits incorrectly charged Ser-tRNA(Ala) and Gly-tRNA(Ala) via its editing domain. The sequence is that of Alanine--tRNA ligase from Shewanella amazonensis (strain ATCC BAA-1098 / SB2B).